The chain runs to 67 residues: MKATDLRQSTTEELNGKVGEWKEELFNLRFQLATGQLENPARIREVRKSIARAKTILRERELGINNG.

Belongs to the universal ribosomal protein uL29 family.

In Exiguobacterium sp. (strain ATCC BAA-1283 / AT1b), this protein is Large ribosomal subunit protein uL29.